The following is a 340-amino-acid chain: Fructose import permease protein FruG (340 aa).

The next 9 helical transmembrane spans lie at 23 to 43 (IPTL…QALF), 49 to 69 (LGFI…AVAM), 73 to 93 (ILTG…AVVG), 101 to 121 (VPAF…GLLA), 130 to 150 (MQPF…ASII), 182 to 202 (LSFN…YVFL), 234 to 254 (IIYL…TANI), 273 to 293 (VVIG…SVLG), and 307 to 327 (FGVP…VFVV).

Belongs to the binding-protein-dependent transport system permease family. As to quaternary structure, the complex is composed of an ATP-binding protein (FruK), two transmembrane proteins (FruF and FruG) and a solute-binding protein (FruE).

The protein localises to the cell membrane. Part of the high-affinity ABC transporter complex FruEKFG involved in fructose uptake. Can also transport ribose and xylose, with lower affinity. Probably responsible for the translocation of the substrate across the membrane. In Bifidobacterium longum (strain NCC 2705), this protein is Fructose import permease protein FruG.